The following is a 1059-amino-acid chain: Translation initiation factor IF-2 (1059 aa).

Polar residues-rich tracts occupy residues 55-75 (LPHS…NQDS) and 107-126 (KINN…NNQV). Disordered stretches follow at residues 55-81 (LPHS…GYNE), 93-394 (PKPL…RLRL), and 418-468 (SLSL…QSAE). The span at 178-187 (DSNEKSKVEV) shows a compositional bias: basic and acidic residues. The segment covering 202–211 (LNRNLRNTGV) has biased composition (polar residues). The segment covering 216–229 (QKNKKPKQEGKKRK) has biased composition (basic residues). Composition is skewed to basic and acidic residues over residues 230 to 252 (DKEE…DTSI) and 259 to 273 (SKKE…RESV). Residues 274-284 (KTSASDTSSQL) show a composition bias toward polar residues. Basic and acidic residues-rich tracts occupy residues 291 to 300 (KPTVKLKQEQ) and 359 to 368 (LTKDKKVSKW). Positions 452–463 (SHESVQSESNEQ) are enriched in low complexity. In terms of domain architecture, tr-type G spans 556–733 (RRPPVVTIMG…EVEDLQANPE (178 aa)). Residues 565 to 572 (GHVDHGKT) are G1. 565–572 (GHVDHGKT) provides a ligand contact to GTP. The segment at 590–594 (GITQH) is G2. Positions 615-618 (DTPG) are G3. GTP contacts are provided by residues 615–619 (DTPGH) and 669–672 (NKID). Residues 669–672 (NKID) form a G4 region. The G5 stretch occupies residues 705 to 707 (SAI).

It belongs to the TRAFAC class translation factor GTPase superfamily. Classic translation factor GTPase family. IF-2 subfamily.

It is found in the cytoplasm. Its function is as follows. One of the essential components for the initiation of protein synthesis. Protects formylmethionyl-tRNA from spontaneous hydrolysis and promotes its binding to the 30S ribosomal subunits. Also involved in the hydrolysis of GTP during the formation of the 70S ribosomal complex. The protein is Translation initiation factor IF-2 of Trichodesmium erythraeum (strain IMS101).